A 188-amino-acid chain; its full sequence is dCTP deaminase (188 aa).

Residues 111-116 (KSTYAR), 135-137 (TLE), Q156, Y170, and Q180 contribute to the dCTP site. E137 (proton donor/acceptor) is an active-site residue.

Belongs to the dCTP deaminase family. Homotrimer.

The catalysed reaction is dCTP + H2O + H(+) = dUTP + NH4(+). Its pathway is pyrimidine metabolism; dUMP biosynthesis; dUMP from dCTP (dUTP route): step 1/2. In terms of biological role, catalyzes the deamination of dCTP to dUTP. This is dCTP deaminase from Janthinobacterium sp. (strain Marseille) (Minibacterium massiliensis).